Consider the following 329-residue polypeptide: MAEVFVGPVAQGYASGEVTVLLASPRSFCAGVERAIETVKRVLDVAEGPVYVRKQIVHNTVVVAELRDRGAVFVEDLDEIPDPPPPGAVVVFSAHGVSPAVRAGADERGLQVVDATCPLVAKVHAEAARFAARGDTVVFIGHAGHEETEGTLGVAPRSTLLVQTPADVAALNLPEGTQLSYLTQTTLALDETADVIDALRARFPTLGQPPSEDICYATTNRQRALQSMVGECDVVLVIGSCNSSNSRRLVELAQRSGTPAYLIDGPDDIEPEWLSSVSTIGVTAGASAPPRLVGQVIDALRGYASITVVERSIATETVRFGLPKQVRAQ.

[4Fe-4S] cluster is bound at residue cysteine 29. 2 residues coordinate (2E)-4-hydroxy-3-methylbut-2-enyl diphosphate: histidine 58 and histidine 95. 2 residues coordinate dimethylallyl diphosphate: histidine 58 and histidine 95. 2 residues coordinate isopentenyl diphosphate: histidine 58 and histidine 95. Cysteine 117 contributes to the [4Fe-4S] cluster binding site. Histidine 145 is a (2E)-4-hydroxy-3-methylbut-2-enyl diphosphate binding site. Histidine 145 is a dimethylallyl diphosphate binding site. Residue histidine 145 coordinates isopentenyl diphosphate. Catalysis depends on glutamate 147, which acts as the Proton donor. Threonine 185 is a binding site for (2E)-4-hydroxy-3-methylbut-2-enyl diphosphate. Cysteine 215 is a [4Fe-4S] cluster binding site. (2E)-4-hydroxy-3-methylbut-2-enyl diphosphate-binding residues include serine 243, serine 244, asparagine 245, and serine 287. Residues serine 243, serine 244, asparagine 245, and serine 287 each contribute to the dimethylallyl diphosphate site. Isopentenyl diphosphate-binding residues include serine 243, serine 244, asparagine 245, and serine 287.

This sequence belongs to the IspH family. The cofactor is [4Fe-4S] cluster.

The catalysed reaction is isopentenyl diphosphate + 2 oxidized [2Fe-2S]-[ferredoxin] + H2O = (2E)-4-hydroxy-3-methylbut-2-enyl diphosphate + 2 reduced [2Fe-2S]-[ferredoxin] + 2 H(+). It carries out the reaction dimethylallyl diphosphate + 2 oxidized [2Fe-2S]-[ferredoxin] + H2O = (2E)-4-hydroxy-3-methylbut-2-enyl diphosphate + 2 reduced [2Fe-2S]-[ferredoxin] + 2 H(+). It participates in isoprenoid biosynthesis; dimethylallyl diphosphate biosynthesis; dimethylallyl diphosphate from (2E)-4-hydroxy-3-methylbutenyl diphosphate: step 1/1. The protein operates within isoprenoid biosynthesis; isopentenyl diphosphate biosynthesis via DXP pathway; isopentenyl diphosphate from 1-deoxy-D-xylulose 5-phosphate: step 6/6. Its function is as follows. Catalyzes the conversion of 1-hydroxy-2-methyl-2-(E)-butenyl 4-diphosphate (HMBPP) into a mixture of isopentenyl diphosphate (IPP) and dimethylallyl diphosphate (DMAPP). Acts in the terminal step of the DOXP/MEP pathway for isoprenoid precursor biosynthesis. The protein is 4-hydroxy-3-methylbut-2-enyl diphosphate reductase 1 of Mycobacterium tuberculosis (strain CDC 1551 / Oshkosh).